Here is a 436-residue protein sequence, read N- to C-terminus: 3-ketoacyl-CoA thiolase (436 aa).

The active-site Acyl-thioester intermediate is Cys-99. Catalysis depends on proton acceptor residues His-392 and Cys-422.

It belongs to the thiolase-like superfamily. Thiolase family. In terms of assembly, heterotetramer of two alpha chains (FadJ) and two beta chains (FadI).

It localises to the cytoplasm. It catalyses the reaction an acyl-CoA + acetyl-CoA = a 3-oxoacyl-CoA + CoA. It functions in the pathway lipid metabolism; fatty acid beta-oxidation. Catalyzes the final step of fatty acid oxidation in which acetyl-CoA is released and the CoA ester of a fatty acid two carbons shorter is formed. This is 3-ketoacyl-CoA thiolase from Escherichia coli O1:K1 / APEC.